Consider the following 512-residue polypeptide: Histidine ammonia-lyase (512 aa).

The segment at residues 142–144 (ASG) is a cross-link (5-imidazolinone (Ala-Gly)). Serine 143 carries the post-translational modification 2,3-didehydroalanine (Ser).

The protein belongs to the PAL/histidase family. Contains an active site 4-methylidene-imidazol-5-one (MIO), which is formed autocatalytically by cyclization and dehydration of residues Ala-Ser-Gly.

It is found in the cytoplasm. It carries out the reaction L-histidine = trans-urocanate + NH4(+). It functions in the pathway amino-acid degradation; L-histidine degradation into L-glutamate; N-formimidoyl-L-glutamate from L-histidine: step 1/3. The polypeptide is Histidine ammonia-lyase (Bartonella henselae (strain ATCC 49882 / DSM 28221 / CCUG 30454 / Houston 1) (Rochalimaea henselae)).